The chain runs to 274 residues: Large ribosomal subunit protein uL2 (274 aa).

The disordered stretch occupies residues 223–264; that stretch reads VAMNPVDHPHGGGEGRTSGGRHPVSPWGVPTKGYKTRSNKRT.

This sequence belongs to the universal ribosomal protein uL2 family. Part of the 50S ribosomal subunit. Forms a bridge to the 30S subunit in the 70S ribosome.

Functionally, one of the primary rRNA binding proteins. Required for association of the 30S and 50S subunits to form the 70S ribosome, for tRNA binding and peptide bond formation. It has been suggested to have peptidyltransferase activity; this is somewhat controversial. Makes several contacts with the 16S rRNA in the 70S ribosome. The polypeptide is Large ribosomal subunit protein uL2 (Shewanella denitrificans (strain OS217 / ATCC BAA-1090 / DSM 15013)).